The sequence spans 265 residues: Transcription factor BHLH089 (265 aa).

Residues 1 to 132 (MDPAPTLAAE…PPPPEPPKQD (132 aa)) form a disordered region. Composition is skewed to gly residues over residues 17 to 29 (LGGG…GGRG) and 44 to 53 (SRGGGGGGGA). The segment covering 95–105 (SKSSGDNSSLR) has biased composition (polar residues). A basic motif; degenerate region spans residues 142–155 (QATDSHSLAERARR). One can recognise a bHLH domain in the interval 142-192 (QATDSHSLAERARREKISERMKILQDLVPGCNKVIGKASVLDEIINYIQAL). The tract at residues 156–192 (EKISERMKILQDLVPGCNKVIGKASVLDEIINYIQAL) is helix-loop-helix motif.

Belongs to the bHLH protein family. As to quaternary structure, interacts with RSS3.

The protein resides in the nucleus. Transcription factor that may regulate jasmonate-regulated genes. This is Transcription factor BHLH089 from Oryza sativa subsp. japonica (Rice).